The sequence spans 162 residues: Phosphopantetheine adenylyltransferase (162 aa).

Residue S11 participates in substrate binding. ATP contacts are provided by residues 11 to 12 (SF) and H19. Residues K43, V76, and R90 each contribute to the substrate site. Residues 91–93 (GLR), E101, and 126–132 (HLYISSS) each bind ATP.

Belongs to the bacterial CoaD family. As to quaternary structure, homohexamer. Requires Mg(2+) as cofactor.

It is found in the cytoplasm. The catalysed reaction is (R)-4'-phosphopantetheine + ATP + H(+) = 3'-dephospho-CoA + diphosphate. It functions in the pathway cofactor biosynthesis; coenzyme A biosynthesis; CoA from (R)-pantothenate: step 4/5. Its function is as follows. Reversibly transfers an adenylyl group from ATP to 4'-phosphopantetheine, yielding dephospho-CoA (dPCoA) and pyrophosphate. In Streptococcus pneumoniae (strain Taiwan19F-14), this protein is Phosphopantetheine adenylyltransferase.